The primary structure comprises 669 residues: DNA ligase (669 aa).

NAD(+) is bound by residues 33–37 (DAEYD), 82–83 (SL), and glutamate 114. Catalysis depends on lysine 116, which acts as the N6-AMP-lysine intermediate. Positions 137, 174, 291, and 315 each coordinate NAD(+). Zn(2+)-binding residues include cysteine 409, cysteine 412, cysteine 427, and cysteine 433. A BRCT domain is found at 593–669 (EIPQPLAGKV…QTEQDLLALL (77 aa)).

Belongs to the NAD-dependent DNA ligase family. LigA subfamily. Mg(2+) serves as cofactor. It depends on Mn(2+) as a cofactor.

It carries out the reaction NAD(+) + (deoxyribonucleotide)n-3'-hydroxyl + 5'-phospho-(deoxyribonucleotide)m = (deoxyribonucleotide)n+m + AMP + beta-nicotinamide D-nucleotide.. In terms of biological role, DNA ligase that catalyzes the formation of phosphodiester linkages between 5'-phosphoryl and 3'-hydroxyl groups in double-stranded DNA using NAD as a coenzyme and as the energy source for the reaction. It is essential for DNA replication and repair of damaged DNA. The chain is DNA ligase from Vibrio vulnificus (strain CMCP6).